Consider the following 385-residue polypeptide: MKFVDEVEIRVEAGDGGAGIVSFRREKYIPEGGPDGGDGGDGGSVYLQADENLNTLIDYQFERFHRADRGTNGRSRNCTGKKSDDLIIMVPVGTRIMDVDTQEGLGDLTQHGQKILVAKGGFHGLGNARFKSSTNRAPRQKTLGTEGEVRNLKLELLLLADVGLLGLPNAGKSTFIRSVSAAKPKVADYPFTTLIPNLGVVRPEANKSFVIADIPGLIEGASDGAGLGIQFLKHLERCRILLHIIDVMPVDGSNPVDNAFAIVNELHQYSPKLAEKPRWLVFNKIDLLPADEAKALCEKIAQELGETENIYSISAINKSNTQPLIHDVMTLLESMPKEKFVETTDEEVEFKWDTYHQKAAKKSDDDDDWDEWNEDDYDVEVVYER.

In terms of domain architecture, Obg spans 1–159 (MKFVDEVEIR…RNLKLELLLL (159 aa)). Positions 160-333 (ADVGLLGLPN…LIHDVMTLLE (174 aa)) constitute an OBG-type G domain. GTP-binding positions include 166–173 (GLPNAGKS), 191–195 (FTTLI), 213–216 (DIPG), 283–286 (NKID), and 314–316 (SAI). Mg(2+)-binding residues include Ser173 and Thr193.

Belongs to the TRAFAC class OBG-HflX-like GTPase superfamily. OBG GTPase family. In terms of assembly, monomer. Mg(2+) serves as cofactor.

The protein localises to the cytoplasm. An essential GTPase which binds GTP, GDP and possibly (p)ppGpp with moderate affinity, with high nucleotide exchange rates and a fairly low GTP hydrolysis rate. Plays a role in control of the cell cycle, stress response, ribosome biogenesis and in those bacteria that undergo differentiation, in morphogenesis control. The polypeptide is GTPase Obg (Pseudoalteromonas translucida (strain TAC 125)).